The following is a 425-amino-acid chain: tRNA(Met) cytidine acetate ligase (425 aa).

Residues 7–20 (VVEY…HLHH), Gly102, Asn162, and 187–188 (RI) each bind ATP.

The protein belongs to the TmcAL family.

The protein resides in the cytoplasm. The enzyme catalyses cytidine(34) in elongator tRNA(Met) + acetate + ATP = N(4)-acetylcytidine(34) in elongator tRNA(Met) + AMP + diphosphate. Functionally, catalyzes the formation of N(4)-acetylcytidine (ac(4)C) at the wobble position of elongator tRNA(Met), using acetate and ATP as substrates. First activates an acetate ion to form acetyladenylate (Ac-AMP) and then transfers the acetyl group to tRNA to form ac(4)C34. This Fervidobacterium nodosum (strain ATCC 35602 / DSM 5306 / Rt17-B1) protein is tRNA(Met) cytidine acetate ligase.